Here is a 261-residue protein sequence, read N- to C-terminus: Indole-3-glycerol phosphate synthase (261 aa).

It belongs to the TrpC family.

The catalysed reaction is 1-(2-carboxyphenylamino)-1-deoxy-D-ribulose 5-phosphate + H(+) = (1S,2R)-1-C-(indol-3-yl)glycerol 3-phosphate + CO2 + H2O. It participates in amino-acid biosynthesis; L-tryptophan biosynthesis; L-tryptophan from chorismate: step 4/5. This is Indole-3-glycerol phosphate synthase from Burkholderia thailandensis (strain ATCC 700388 / DSM 13276 / CCUG 48851 / CIP 106301 / E264).